A 474-amino-acid polypeptide reads, in one-letter code: UDP-N-acetylmuramoyl-L-alanyl-D-glutamate--2,6-diaminopimelate ligase (474 aa).

UDP-N-acetyl-alpha-D-muramoyl-L-alanyl-D-glutamate is bound at residue S21. 93 to 99 (GTNGKSS) serves as a coordination point for ATP. Residues 139–140 (TT), S166, Q172, and R174 each bind UDP-N-acetyl-alpha-D-muramoyl-L-alanyl-D-glutamate. K206 carries the N6-carboxylysine modification. Meso-2,6-diaminopimelate is bound by residues R367, 391 to 394 (DNPR), G441, and E445. A Meso-diaminopimelate recognition motif motif is present at residues 391–394 (DNPR).

This sequence belongs to the MurCDEF family. MurE subfamily. It depends on Mg(2+) as a cofactor. Carboxylation is probably crucial for Mg(2+) binding and, consequently, for the gamma-phosphate positioning of ATP.

It is found in the cytoplasm. It catalyses the reaction UDP-N-acetyl-alpha-D-muramoyl-L-alanyl-D-glutamate + meso-2,6-diaminopimelate + ATP = UDP-N-acetyl-alpha-D-muramoyl-L-alanyl-gamma-D-glutamyl-meso-2,6-diaminopimelate + ADP + phosphate + H(+). It participates in cell wall biogenesis; peptidoglycan biosynthesis. Catalyzes the addition of meso-diaminopimelic acid to the nucleotide precursor UDP-N-acetylmuramoyl-L-alanyl-D-glutamate (UMAG) in the biosynthesis of bacterial cell-wall peptidoglycan. In Rickettsia bellii (strain RML369-C), this protein is UDP-N-acetylmuramoyl-L-alanyl-D-glutamate--2,6-diaminopimelate ligase.